The primary structure comprises 314 residues: Homoserine kinase (314 aa).

95–105 contacts ATP; the sequence is PHSRGLGSSAA.

This sequence belongs to the GHMP kinase family. Homoserine kinase subfamily.

It is found in the cytoplasm. It carries out the reaction L-homoserine + ATP = O-phospho-L-homoserine + ADP + H(+). The protein operates within amino-acid biosynthesis; L-threonine biosynthesis; L-threonine from L-aspartate: step 4/5. Functionally, catalyzes the ATP-dependent phosphorylation of L-homoserine to L-homoserine phosphate. The protein is Homoserine kinase of Mycobacterium sp. (strain JLS).